Here is a 90-residue protein sequence, read N- to C-terminus: DNA/RNA-binding protein Alba (90 aa).

N6-acetyllysine is present on Lys8.

It belongs to the histone-like Alba family. In terms of processing, acetylated. Acetylation at Lys-8 decreases DNA-binding affinity.

It is found in the cytoplasm. Its subcellular location is the chromosome. Binds double-stranded DNA tightly but without sequence specificity. Involved in DNA compaction. The chain is DNA/RNA-binding protein Alba from Nanoarchaeum equitans (strain Kin4-M).